The sequence spans 440 residues: Deoxyguanosinetriphosphate triphosphohydrolase-like protein (440 aa).

The HD domain maps to 62 to 255; the sequence is RLTHSLEAAQ…MELADDIAYG (194 aa).

This sequence belongs to the dGTPase family. Type 2 subfamily.

This Vibrio parahaemolyticus serotype O3:K6 (strain RIMD 2210633) protein is Deoxyguanosinetriphosphate triphosphohydrolase-like protein.